Here is a 24-residue protein sequence, read N- to C-terminus: Fraternine (24 aa).

Cysteines 11 and 24 form a disulfide. Position 24 is a cysteine amide (Cys-24).

Expressed by the venom gland.

The protein resides in the secreted. In terms of biological role, wasp venom peptide that acts as a potent mast cell degranulating peptide without hemolytic activity. Shows neuroprotective effect, since it prevents the death of dopaminergic neurons of the brain substantia nigra region and recovers motor deficit in a 6-hydroxydopamine (6-OHDA)-induced murine model of Parkinson disease. The protein is Fraternine of Parachartergus fraternus (Artistic wasp).